The chain runs to 746 residues: Protein O-mannosyl-transferase 1 (746 aa).

7 consecutive transmembrane segments (helical) span residues 30 to 50 (PLVVTVDINLNLVALTGLGLL), 90 to 110 (FGHMLLALGGWLGGFDGNFLW), 121 to 141 (VPIWSLRLLPALAGALSVPMA), 144 to 164 (IVLELHFSHGAAIGAALLMLI), 176 to 196 (LLESILIFFNLLAVLSYLKFF), 228 to 248 (MGIFTYLLVLGIAAVHAWNLI), and 266 to 286 (IVALLVVPVFLYLLFFYVHLM). 3 MIR domains span residues 318–381 (PLEV…VKDP), 392–449 (PRPV…LDIV), and 453–513 (SNRD…VEEH). 3 N-linked (GlcNAc...) asparagine glycosylation sites follow: asparagine 435, asparagine 471, and asparagine 539. Helical transmembrane passes span 597–617 (IVIWTSASLATVVYTLLFFWY), 636–656 (WVLAGALCTGGWALNYLPFFL), and 660–680 (VLFLYHYLPALTFQILLLPIV).

The protein belongs to the glycosyltransferase 39 family.

It localises to the endoplasmic reticulum membrane. The enzyme catalyses a di-trans,poly-cis-dolichyl beta-D-mannosyl phosphate + L-seryl-[protein] = 3-O-(alpha-D-mannosyl)-L-seryl-[protein] + a di-trans,poly-cis-dolichyl phosphate + H(+). It catalyses the reaction a di-trans,poly-cis-dolichyl beta-D-mannosyl phosphate + L-threonyl-[protein] = 3-O-(alpha-D-mannosyl)-L-threonyl-[protein] + a di-trans,poly-cis-dolichyl phosphate + H(+). Its pathway is protein modification; protein glycosylation. Its function is as follows. Transfers mannosyl residues to the hydroxyl group of serine or threonine residues. Coexpression of both POMT1 and POMT2 is necessary for enzyme activity, expression of either POMT1 or POMT2 alone is insufficient. Essentially dedicated to O-mannosylation of alpha-DAG1 and few other proteins but not of cadherins and protocaherins. This Mus musculus (Mouse) protein is Protein O-mannosyl-transferase 1 (Pomt1).